The primary structure comprises 144 residues: Phospholipase A2, membrane associated (144 aa).

The signal sequence occupies residues 1 to 20 (MKTLLLLAVIMAIGLLQVHG). 7 disulfides stabilise this stretch: C46–C137, C48–C64, C63–C117, C69–C144, C70–C110, C79–C103, and C97–C108. Residues Y47, G49, and S51 each coordinate Ca(2+). H67 is an active-site residue. D68 lines the Ca(2+) pocket. The active site involves D111.

Belongs to the phospholipase A2 family. The cofactor is Ca(2+).

Its subcellular location is the secreted. The protein localises to the cell membrane. It localises to the mitochondrion outer membrane. The catalysed reaction is a 1,2-diacyl-sn-glycero-3-phosphoethanolamine + H2O = a 1-acyl-sn-glycero-3-phosphoethanolamine + a fatty acid + H(+). The enzyme catalyses 1-hexadecanoyl-2-(9Z-octadecenoyl)-sn-glycero-3-phosphoethanolamine + H2O = 1-hexadecanoyl-sn-glycero-3-phosphoethanolamine + (9Z)-octadecenoate + H(+). It catalyses the reaction 1-hexadecanoyl-2-(9Z,12Z-octadecadienoyl)-sn-glycero-3-phosphoethanolamine + H2O = 1-hexadecanoyl-sn-glycero-3-phosphoethanolamine + (9Z,12Z)-octadecadienoate + H(+). It carries out the reaction 1-hexadecanoyl-2-(5Z,8Z,11Z,14Z-eicosatetraenoyl)-sn-glycero-3-phosphoethanolamine + H2O = 1-hexadecanoyl-sn-glycero-3-phosphoethanolamine + (5Z,8Z,11Z,14Z)-eicosatetraenoate + H(+). The catalysed reaction is N-hexadecanoyl-1,2-di-(9Z-octadecenoyl)-sn-glycero-3-phosphoethanolamine + H2O = N-hexadecanoyl-1-(9Z-octadecenoyl)-sn-glycero-3-phosphoethanolamine + (9Z)-octadecenoate + H(+). The enzyme catalyses 1,2-dihexadecanoyl-sn-glycero-3-phospho-(1'-sn-glycerol) + H2O = 1-hexadecanoyl-sn-glycero-3-phospho-(1'-sn-glycerol) + hexadecanoate + H(+). It catalyses the reaction 1-hexadecanoyl-2-(9Z-octadecenoyl)-sn-glycero-3-phosphoglycerol + H2O = 1-hexadecanoyl-sn-glycero-3-phosphoglycerol + (9Z)-octadecenoate + H(+). It carries out the reaction 1-hexadecanoyl-2-(9Z-octadecenoyl)-sn-glycero-3-phospho-(1'-sn-glycerol) + H2O = 1-hexadecanoyl-sn-glycero-3-phospho-(1'-sn-glycerol) + (9Z)-octadecenoate + H(+). The catalysed reaction is a 1,2-diacyl-sn-glycero-3-phosphocholine + H2O = a 1-acyl-sn-glycero-3-phosphocholine + a fatty acid + H(+). The enzyme catalyses 1,2-dihexadecanoyl-sn-glycero-3-phosphocholine + H2O = 1-hexadecanoyl-sn-glycero-3-phosphocholine + hexadecanoate + H(+). It catalyses the reaction 1-hexadecanoyl-2-(9Z-octadecenoyl)-sn-glycero-3-phosphocholine + H2O = 1-hexadecanoyl-sn-glycero-3-phosphocholine + (9Z)-octadecenoate + H(+). It carries out the reaction 1-hexadecanoyl-2-(9Z,12Z-octadecadienoyl)-sn-glycero-3-phosphocholine + H2O = (9Z,12Z)-octadecadienoate + 1-hexadecanoyl-sn-glycero-3-phosphocholine + H(+). The catalysed reaction is 1-hexadecanoyl-2-(4Z,7Z,10Z,13Z,16Z,19Z-docosahexaenoyl)-sn-glycero-3-phosphocholine + H2O = (4Z,7Z,10Z,13Z,16Z,19Z)-docosahexaenoate + 1-hexadecanoyl-sn-glycero-3-phosphocholine + H(+). Its function is as follows. Secretory calcium-dependent phospholipase A2 that primarily targets extracellular phospholipids with implications in host antimicrobial defense, inflammatory response and tissue regeneration. Hydrolyzes the ester bond of the fatty acyl group attached at sn-2 position of phospholipids (phospholipase A2 activity) with preference for phosphatidylethanolamines and phosphatidylglycerols over phosphatidylcholines. Contributes to lipid remodeling of cellular membranes and generation of lipid mediators involved in pathogen clearance. Displays bactericidal activity against Gram-positive bacteria by directly hydrolyzing phospholipids of the bacterial membrane. Upon sterile inflammation, targets membrane phospholipids of extracellular mitochondria released from activated platelets, generating free unsaturated fatty acids such as arachidonate that is used by neighboring leukocytes to synthesize inflammatory eicosanoids such as leukotrienes. Simultaneously, by compromising mitochondrial membrane integrity, promotes the release in circulation of potent damage-associated molecular pattern molecules that activate the innate immune response. Plays a stem cell regulator role in the intestinal crypt. Within intracellular compartment mediates Paneth cell differentiation and its stem cell supporting functions by inhibiting Wnt signaling pathway in intestinal stem cell (ICS). Secreted in the intestinal lumen upon inflammation, acts in an autocrine way and promotes prostaglandin E2 synthesis that stimulates Wnt signaling pathway in ICS cells and tissue regeneration. May play a role in the biosynthesis of N-acyl ethanolamines that regulate energy metabolism and inflammation. Hydrolyzes N-acyl phosphatidylethanolamines to N-acyl lysophosphatidylethanolamines, which are further cleaved by a lysophospholipase D to release N-acyl ethanolamines. Independent of its catalytic activity, acts as a ligand for integrins. Binds to and activates integrins ITGAV:ITGB3, ITGA4:ITGB1 and ITGA5:ITGB1. Binds to a site (site 2) which is distinct from the classical ligand-binding site (site 1) and induces integrin conformational changes and enhanced ligand binding to site 1. Induces cell proliferation in an integrin-dependent manner. This chain is Phospholipase A2, membrane associated (PLA2G2A), found in Bos taurus (Bovine).